We begin with the raw amino-acid sequence, 425 residues long: Putative chloroquine resistance transporter (425 aa).

At 1 to 56 the chain is on the cytoplasmic side; it reads MTGIKKGKNKKKNMKNDDRYKELDSLITNGSEIGNNSGRSCVKRFFKIIGNEMKNN. Residues 57-77 form a helical membrane-spanning segment; that stretch reads VYVYLLSILYLCVCVMNKVFA. Residues 78 to 88 are Vacuolar-facing; it reads KRTLNKMGNYS. An N-linked (GlcNAc...) asparagine glycan is attached at asparagine 86. Residues 89-109 traverse the membrane as a helical segment; sequence FVTSETHNIICIIVFQLLYFI. Over 110–126 the chain is Cytoplasmic; it reads YRKTSSSSVYKNESQKN. The chain crosses the membrane as a helical span at residues 127-147; that stretch reads FGWQFFLISLLDASTVIISMI. The Vacuolar portion of the chain corresponds to 148 to 157; the sequence is GLTRTTGNIQ. Residues 158–178 traverse the membrane as a helical segment; it reads SFIMQLIIPVNMYFWFMFLGY. At 179–181 the chain is on the cytoplasmic side; sequence RYH. The helical transmembrane segment at 182–202 threads the bilayer; sequence LFNYLGAFIILITIAVVETFL. The Vacuolar portion of the chain corresponds to 203–210; the sequence is SFETQGEN. A helical transmembrane segment spans residues 211–231; it reads SIIFNLIMISAFNTLSFSNMT. Over 232–249 the chain is Cytoplasmic; sequence REVVFKKHKINILRLNAM. Residues 250–270 form a helical membrane-spanning segment; sequence VVLFQFFTSLLVLPVYNIPFL. Over 271-318 the chain is Vacuolar; the sequence is KEIYMPFSEMSTNINNGLRCLFYGENTIVENCGVGMVKMCDNCEGAWK. 2 cysteine pairs are disulfide-bonded: cysteine 290–cysteine 313 and cysteine 302–cysteine 310. A helical membrane pass occupies residues 319 to 339; the sequence is TFITFSFFNICDNLLACYIID. Residues 340-347 are Cytoplasmic-facing; the sequence is KFSTMTYT. Residues 348–368 traverse the membrane as a helical segment; the sequence is IVSCIQGPAITIAYYFKFLAG. At 369 to 378 the chain is on the vacuolar side; it reads DAVRKPRILD. The helical transmembrane segment at 379–399 threads the bilayer; sequence FLTLFGYLFGTIIYRIGNIIL. Topologically, residues 400 to 425 are cytoplasmic; it reads EKKQVIKSQNSNDSEAELTSIETSRA.

This sequence belongs to the CRT-like transporter family.

Its subcellular location is the vacuole membrane. Nutrient transporter. Involved in maintaining the osmotic homeostasis of the digestive vacuole. This is Putative chloroquine resistance transporter from Plasmodium berghei.